Here is a 443-residue protein sequence, read N- to C-terminus: ATP-dependent protease ATPase subunit HslU (443 aa).

Residues V18 and 60–65 each bind ATP; that span reads GVGKTE. The interval 139-160 is disordered; the sequence is AKNNWGQPEESGEPSSARQNFR. 3 residues coordinate ATP: D256, E321, and R393.

The protein belongs to the ClpX chaperone family. HslU subfamily. A double ring-shaped homohexamer of HslV is capped on each side by a ring-shaped HslU homohexamer. The assembly of the HslU/HslV complex is dependent on binding of ATP.

It is found in the cytoplasm. In terms of biological role, ATPase subunit of a proteasome-like degradation complex; this subunit has chaperone activity. The binding of ATP and its subsequent hydrolysis by HslU are essential for unfolding of protein substrates subsequently hydrolyzed by HslV. HslU recognizes the N-terminal part of its protein substrates and unfolds these before they are guided to HslV for hydrolysis. This Sodalis glossinidius (strain morsitans) protein is ATP-dependent protease ATPase subunit HslU.